We begin with the raw amino-acid sequence, 280 residues long: Myb family transcription factor PHL11 (280 aa).

Positions 20 to 80 (RDPKPRLRWT…HLQKYRLGQQ (61 aa)) constitute an HTH myb-type domain. Positions 51 to 76 (PKSVLKLMGLKGLTLYHLKSHLQKYR) form a DNA-binding region, H-T-H motif. The tract at residues 77–98 (LGQQQGKKQNRTEQNKENAGSS) is disordered. Residues 129-149 (AEAMRHQVDAQQRFQEQLEVQ) form a coiled coil region. Positions 142–147 (FQEQLE) match the LHEQLE motif.

It belongs to the MYB-CC family.

The protein resides in the nucleus. This chain is Myb family transcription factor PHL11, found in Arabidopsis thaliana (Mouse-ear cress).